The following is a 460-amino-acid chain: Telomere-binding protein homolog (460 aa).

This sequence belongs to the telombin family.

The protein resides in the nucleus. It localises to the chromosome. The protein localises to the telomere. Functionally, may bind telomeric T4G4 sequences. The polypeptide is Telomere-binding protein homolog (Euplotes crassus).